The following is a 778-amino-acid chain: ATP-dependent RNA helicase dbp7 (778 aa).

The segment at 20 to 144 (QTKIKGGSWR…PMEDAKPTNA (125 aa)) is disordered. The span at 47–58 (RTADGDGNKDGN) shows a compositional bias: basic and acidic residues. The span at 61–72 (GPRNPNRIQVSG) shows a compositional bias: polar residues. Gly residues predominate over residues 92–110 (QAHGQGSGQSKGPKKGQGG). Residues 125–140 (NAVEEDKNDEPMEDAK) are compositionally biased toward basic and acidic residues. Positions 151-180 (DTFTNLGLSPTLAAHLLTKLELKAPTAIQK) match the Q motif motif. Residues 184–385 (TQLLKEETDA…EISLKDAVHI (202 aa)) form the Helicase ATP-binding domain. 197–204 (AETGSGKT) is an ATP binding site. The DEAD box signature appears at 321–324 (DEGD). The Helicase C-terminal domain occupies 411 to 625 (QLKQSYAIVA…ALTRSTTDDI (215 aa)). Acidic residues predominate over residues 470–479 (LEGDNPDEGS). Disordered regions lie at residues 470–503 (LEGD…TVAP) and 700–778 (GKIN…FNLA). 2 stretches are compositionally biased toward basic and acidic residues: residues 480-492 (DSEH…KEKP) and 709-724 (PGKE…ERKS).

The protein belongs to the DEAD box helicase family. DDX31/DBP7 subfamily.

It localises to the nucleus. The protein resides in the nucleolus. The catalysed reaction is ATP + H2O = ADP + phosphate + H(+). Functionally, ATP-binding RNA helicase involved in the biogenesis of 60S ribosomal subunits and is required for the normal formation of 25S and 5.8S rRNAs. The protein is ATP-dependent RNA helicase dbp7 (dbp7) of Emericella nidulans (strain FGSC A4 / ATCC 38163 / CBS 112.46 / NRRL 194 / M139) (Aspergillus nidulans).